A 410-amino-acid chain; its full sequence is Lissencephaly-1 homolog B (410 aa).

Positions 7 to 39 (QRDELNRAIADYLRSNGYEEAYSTFKKEAELDV) constitute a LisH domain. A coiled-coil region spans residues 56 to 82 (TSVIRLQKKVMELESKLNEAKEEITLG). 7 WD repeats span residues 106–147 (GHRS…RTLK), 148–187 (GHTD…CIRT), 190–229 (GHDH…CVKT), 232–271 (GHRE…CKAE), 274–333 (EHEH…CLMT), 336–377 (GHDN…KTLS), and 379–410 (HEHF…WECR).

The protein belongs to the WD repeat LIS1/nudF family. In terms of assembly, can self-associate. Component of the cytosolic PAF-AH (I) heterotetrameric enzyme, which is composed of PAFAH1B1 (beta), PAFAH1B2 (alpha2) and PAFAH1B3 (alpha1) subunits. The catalytic activity of the enzyme resides in the alpha1 (PAFAH1B3) and alpha2 (PAFAH1B2) subunits, whereas the beta subunit (PAFAH1B1) has regulatory activity. Trimer formation is not essential for the catalytic activity. Interacts with dynein, dynactin, nde1 and ndel1. As to expression, enriched in the photoreceptor cell layer.

It localises to the cytoplasm. The protein localises to the cytoskeleton. The protein resides in the microtubule organizing center. Its subcellular location is the centrosome. In terms of biological role, regulatory subunit (beta subunit) of the cytosolic type I platelet-activating factor (PAF) acetylhydrolase (PAF-AH (I)), an enzyme that catalyzes the hydrolyze of the acetyl group at the sn-2 position of PAF and its analogs and participates in the PAF inactivation. Regulates the PAF-AH (I) activity in a catalytic dimer composition-dependent manner. Positively regulates the activity of the minus-end directed microtubule motor protein dynein. May enhance dynein-mediated microtubule sliding by targeting dynein to the microtubule plus end. Required for several dynein- and microtubule-dependent processes such as the maintenance of Golgi integrity, the peripheral transport of microtubule fragments and the coupling of the nucleus and centrosome. May be required for proliferation of neuronal precursors and neuronal migration. Involved in the positioning of nuclei in photoreceptor cells. This is Lissencephaly-1 homolog B (pafah1b1b) from Danio rerio (Zebrafish).